We begin with the raw amino-acid sequence, 770 residues long: MDFSKFLADDFDVKEWINAAFRAGSKEAASGKADGHAATLVMKLQLFIQEVNHAVEETSHQALQNMPKVLRDVEALKQEASFLKEQMILVKEDIKKFEQDTSQSMQVLVEIDQVKSRMQLAAESLQEADKWSTLSADIEETFKTQDIAVISAKLTGMQNSLMMLVDTPDYSEKCVHLEALKNRLEALASPQIVAAFTSQAVDQSKVFVKVFTEIDRMPQLLAYYYKCHKVQLLAAWQELCQSDLSLDRQLTGLYDALLGAWHTQIQWATQVFQKPHEVVMVLLIQTLGALMPSLPSCLSNGVERAGPEQELTRLLEFYDATAHFAKGLEMALLPHLHEHNLVKVTELVDAVYDPYKPYQLKYGDMEESNLLIQMSAVPLEHGEVIDCVQELSHSVNKLFGLASAAVDRCVRFTNGLGTCGLLSALKSLFAKYVSDFTSTLQSIRKKCKLDHIPPNSLFQEDWTAFQNSIRIIATCGELLRHCGDFEQQLANRILSTAGKYLSDSCSPRSLAGFQESILTDKKNSAKNPWQEYNYLQKDNPAEYASLMEILYTLKEKGSSNHNLLAAPRAALTRLNQQAHQLAFDSVFLRIKQQLLLISKMDSWNTAGIGETLTDELPAFSLTPLEYISNIGQYIMSLPLNLEPFVTQEDSALELALHAGKLPFPPEQGDELPELDNMADNWLGSIARATMQTYCDAILQIPELSPHSAKQLATDIDYLINVMDALGLQPSRTLQHIVTLLKTRPEDYRQVSKGLPRRLATTVATMRSVNY.

This sequence belongs to the COG7 family. Component of the conserved oligomeric Golgi complex which is composed of eight different subunits and is required for normal Golgi morphology and localization.

It is found in the golgi apparatus membrane. In terms of biological role, required for normal Golgi function. In Homo sapiens (Human), this protein is Conserved oligomeric Golgi complex subunit 7 (COG7).